A 217-amino-acid polypeptide reads, in one-letter code: MKFFVDTADIDAIRELHELGMVDGVTTNPSLIMKSGRDIKEVTAEICALVDGPVSAETVALDADGMINEGRELAKIADNITIKVPLTWAGLQACKVLSGEGRMVNVTLCFSANQALLAAKAGATFISPFVGRLDDLNMDGMDLIAEIRQIYDNYGFETEILVASIRSANHMKDAALIGADVATAPPGVIKAMANHVMTDKGLDAFMADWAKTGQSIV.

K83 serves as the catalytic Schiff-base intermediate with substrate.

The protein belongs to the transaldolase family. Type 3B subfamily.

The protein resides in the cytoplasm. The catalysed reaction is D-sedoheptulose 7-phosphate + D-glyceraldehyde 3-phosphate = D-erythrose 4-phosphate + beta-D-fructose 6-phosphate. It participates in carbohydrate degradation; pentose phosphate pathway; D-glyceraldehyde 3-phosphate and beta-D-fructose 6-phosphate from D-ribose 5-phosphate and D-xylulose 5-phosphate (non-oxidative stage): step 2/3. Functionally, transaldolase is important for the balance of metabolites in the pentose-phosphate pathway. The chain is Probable transaldolase from Jannaschia sp. (strain CCS1).